Here is a 382-residue protein sequence, read N- to C-terminus: Alkanesulfonate monooxygenase (382 aa).

This sequence belongs to the SsuD family.

The catalysed reaction is an alkanesulfonate + FMNH2 + O2 = an aldehyde + FMN + sulfite + H2O + 2 H(+). Functionally, catalyzes the desulfonation of aliphatic sulfonates. In Pseudomonas putida (strain ATCC 47054 / DSM 6125 / CFBP 8728 / NCIMB 11950 / KT2440), this protein is Alkanesulfonate monooxygenase.